Reading from the N-terminus, the 532-residue chain is MGKKVAIIGAGVSGLASIRSCLEEGLEPTCFEKSNDIGGLWKFSDHAEEGRASIYKSVFSNSSKEMMCFPDFPFPDDFPNFMHNSKIQEYIIAFAKEKNLLKYIQFKTFVSSVNKRPDFATTGQWDVTTERDGKKESAVFDAVMVCSGHHVYPNLPKESFPGLNHFKGKCFHSRDYKEPGVFNGKRVLVVGLGNSGCDIATELSRTAEQVMISSRSGSWVMSRVWDNGYPWDMLLVTRFGTFLKNNLPTAISDWLYVKQMNARFKHENYGLMPLNGVLRKEPVFNDELPASILCGIVSVKPNVKEFTETSAIFEDGTIFEGIDCVIFATGYSFAYPFLDESIIKSRNNEIILFKGVFPPLLEKSTIAVIGFVQSLGAAIPTVDLQSRWAAQVIKGTCTLPSMEDMMNDINEKMEKKRKWFGKSETIQTDYIVYMDELSSFIGAKPNIPWLFLTDPKLAMEVYFGPCSPYQFRLVGPGQWPGARNAILTQWDRSLKPMQTRVVGRLQKPCFFFHWLKLFAIPILLIAVFLVLT.

Residues Gly-9–Ser-13, Glu-32, Leu-40–Trp-41, and Asn-61–Ser-62 each bind FAD. NADP(+) is bound by residues Ser-60 to Asn-61 and Ser-195 to Asp-198. Position 401 is a phosphoserine (Ser-401). Residues Phe-510–Val-530 traverse the membrane as a helical segment.

The protein belongs to the FMO family. FAD is required as a cofactor.

The protein localises to the microsome membrane. The protein resides in the endoplasmic reticulum membrane. The catalysed reaction is trimethylamine + NADPH + O2 = trimethylamine N-oxide + NADP(+) + H2O. It carries out the reaction N,N-dimethylaniline + NADPH + O2 + H(+) = N,N-dimethylaniline N-oxide + NADP(+) + H2O. The enzyme catalyses hypotaurine + NADPH + O2 + H(+) = taurine + NADP(+) + H2O. It catalyses the reaction (S)-nicotine + NADPH + O2 = trans-(S)-nicotine N(1')-oxide + NADP(+) + H2O. The catalysed reaction is albendazole + NADPH + O2 + H(+) = albendazole S-oxide + NADP(+) + H2O. Functionally, essential hepatic enzyme that catalyzes the oxygenation of a wide variety of nitrogen- and sulfur-containing compounds including drugs as well as dietary compounds. Plays an important role in the metabolism of trimethylamine (TMA), via the production of trimethylamine N-oxide (TMAO) metabolite. TMA is generated by the action of gut microbiota using dietary precursors such as choline, choline containing compounds, betaine or L-carnitine. By regulating TMAO concentration, FMO3 directly impacts both platelet responsiveness and rate of thrombus formation. The chain is Flavin-containing monooxygenase 3 (FMO3) from Pan troglodytes (Chimpanzee).